A 968-amino-acid chain; its full sequence is Alanine--tRNA ligase, cytoplasmic (968 aa).

Met1 carries the post-translational modification N-acetylmethionine. Phosphoserine is present on residues Ser3 and Ser8. At Lys19 the chain carries N6-acetyllysine. ATP-binding positions include Arg77, His95, Trp176, and 214 to 216 (IWN). The L-alanine site is built by Asn216 and Asp239. Position 243 (Gly243) interacts with ATP. Phosphoserine is present on residues Ser399 and Ser555. Positions 605, 609, 723, and 727 each coordinate Zn(2+). Positions 750 to 763 (RRIVAVTGAEAQKA) match the Nuclear localization signal motif. Residue Lys876 is modified to N6-acetyllysine. N6,N6,N6-trimethyllysine; alternate is present on Lys943. Position 943 is an N6,N6-dimethyllysine; alternate (Lys943). Residue Lys943 is modified to N6-methyllysine; alternate.

This sequence belongs to the class-II aminoacyl-tRNA synthetase family. In terms of assembly, monomer. Interacts with ANKRD16; the interaction is direct. Zn(2+) serves as cofactor. Post-translationally, ISGylated. In terms of processing, methylation at 'Lys-943' by METTL21C.

The protein localises to the cytoplasm. Its subcellular location is the nucleus. The enzyme catalyses tRNA(Ala) + L-alanine + ATP = L-alanyl-tRNA(Ala) + AMP + diphosphate. It catalyses the reaction (S)-lactate + ATP + H(+) = (S)-lactoyl-AMP + diphosphate. It carries out the reaction (S)-lactoyl-AMP + L-lysyl-[protein] = N(6)-[(S)-lactoyl]-L-lysyl-[protein] + AMP + 2 H(+). The protein lactyltransferase activity is inhibited by beta-alanine. Catalyzes the attachment of alanine to tRNA(Ala) in a two-step reaction: alanine is first activated by ATP to form Ala-AMP and then transferred to the acceptor end of tRNA(Ala). Also edits incorrectly charged tRNA(Ala) via its editing domain. In presence of high levels of lactate, also acts as a protein lactyltransferase that mediates lactylation of lysine residues in target proteins, such as TEAD1, TP53/p53 and YAP1. Protein lactylation takes place in a two-step reaction: lactate is first activated by ATP to form lactate-AMP and then transferred to lysine residues of target proteins. Acts as an inhibitor of TP53/p53 activity by catalyzing lactylation of TP53/p53. Acts as a positive regulator of the Hippo pathway by mediating lactylation of TEAD1 and YAP1. The chain is Alanine--tRNA ligase, cytoplasmic from Homo sapiens (Human).